We begin with the raw amino-acid sequence, 636 residues long: Nucleolin 2 (636 aa).

Disordered stretches follow at residues 1–386 (MGKS…SKTL), 458–481 (ANERGTPRNSNPGRKGEGSQSRTI), and 544–636 (SEIG…NDEE). 2 stretches are compositionally biased toward basic and acidic residues: residues 43-63 (KELIDVVQKEKAEKTVPKKVE) and 76-89 (EKTKETPSKLKDES). The segment covering 90–103 (SSEEEDDSSSDEEI) has biased composition (acidic residues). The span at 104-118 (APAKKRPEPIKKAKV) shows a compositional bias: basic and acidic residues. Acidic residues-rich tracts occupy residues 122 to 133 (SSDDDSTSDEET), 152 to 163 (SSDDDSSSDEET), and 182 to 193 (SSDDDSSSDEET). Positions 224–238 (TPAKKEPIVVKKDSS) are enriched in basic and acidic residues. Acidic residues-rich tracts occupy residues 267–278 (SSEEESSSDDEP), 299–311 (SSEEDSDEEESDD), and 331–341 (SSDESSDESDK). The segment covering 342-367 (EESKDEKVTPKKKDSDVEMVDAEQKS) has biased composition (basic and acidic residues). The segment covering 368–383 (NAKQPKTPTNQTQGGS) has biased composition (polar residues). 2 consecutive RRM domains span residues 384-460 (KTLF…LANE) and 479-558 (RTIY…ESRP). The segment covering 464 to 481 (PRNSNPGRKGEGSQSRTI) has biased composition (polar residues). Basic and acidic residues-rich tracts occupy residues 552 to 566 (HVEESRPRDSDEGRS) and 579 to 604 (RHSDRAPRGGRFSDRAPRGRHSDRGA). Residues 622-636 (MESSKGTKTVFNDEE) are compositionally biased toward polar residues.

In terms of assembly, interacts with THAL in the nucleus. In terms of tissue distribution, expressed at low levels in flower buds.

It is found in the nucleus. Its subcellular location is the nucleolus. Its function is as follows. Involved in pre-rRNA processing and ribosome assembly. This is Nucleolin 2 from Arabidopsis thaliana (Mouse-ear cress).